A 115-amino-acid chain; its full sequence is Viral Lymphotactin (115 aa).

An N-terminal signal peptide occupies residues 1-19 (MRLLTILALCCVAIWVVES). Cys30 and Cys67 form a disulfide bridge.

The protein belongs to the intercrine gamma family. In terms of assembly, interacts with host XCR1. In terms of processing, N-glycosylated and O-glycosylated.

The protein resides in the secreted. In terms of biological role, chemoattractant for CD4-dendritic cells, but not for CD4+ dendritic cells, T-cells or B-cells. The protein is Viral Lymphotactin (vXCL1) of Rat cytomegalovirus (isolate England) (RCMV-E).